The primary structure comprises 205 residues: Urease accessory protein UreG (205 aa).

Position 14–21 (14–21 (GPVGSGKT)) interacts with GTP.

The protein belongs to the SIMIBI class G3E GTPase family. UreG subfamily. As to quaternary structure, homodimer. UreD, UreF and UreG form a complex that acts as a GTP-hydrolysis-dependent molecular chaperone, activating the urease apoprotein by helping to assemble the nickel containing metallocenter of UreC. The UreE protein probably delivers the nickel.

Its subcellular location is the cytoplasm. Facilitates the functional incorporation of the urease nickel metallocenter. This process requires GTP hydrolysis, probably effectuated by UreG. In Enterobacter sp. (strain 638), this protein is Urease accessory protein UreG.